Reading from the N-terminus, the 298-residue chain is 4-hydroxy-tetrahydrodipicolinate synthase (298 aa).

Pyruvate is bound at residue Thr-51. The Proton donor/acceptor role is filled by Tyr-139. The Schiff-base intermediate with substrate role is filled by Lys-167. Ile-209 is a binding site for pyruvate.

It belongs to the DapA family. In terms of assembly, homotetramer; dimer of dimers.

The protein localises to the cytoplasm. The catalysed reaction is L-aspartate 4-semialdehyde + pyruvate = (2S,4S)-4-hydroxy-2,3,4,5-tetrahydrodipicolinate + H2O + H(+). It participates in amino-acid biosynthesis; L-lysine biosynthesis via DAP pathway; (S)-tetrahydrodipicolinate from L-aspartate: step 3/4. In terms of biological role, catalyzes the condensation of (S)-aspartate-beta-semialdehyde [(S)-ASA] and pyruvate to 4-hydroxy-tetrahydrodipicolinate (HTPA). In Haemophilus influenzae (strain 86-028NP), this protein is 4-hydroxy-tetrahydrodipicolinate synthase.